The sequence spans 125 residues: Small ribosomal subunit protein uS13 (125 aa).

Residues arginine 92–lysine 125 are disordered. The segment covering arginine 107–lysine 125 has biased composition (basic residues).

The protein belongs to the universal ribosomal protein uS13 family. As to quaternary structure, part of the 30S ribosomal subunit. Forms a loose heterodimer with protein S19. Forms two bridges to the 50S subunit in the 70S ribosome.

In terms of biological role, located at the top of the head of the 30S subunit, it contacts several helices of the 16S rRNA. In the 70S ribosome it contacts the 23S rRNA (bridge B1a) and protein L5 of the 50S subunit (bridge B1b), connecting the 2 subunits; these bridges are implicated in subunit movement. Contacts the tRNAs in the A and P-sites. This chain is Small ribosomal subunit protein uS13, found in Chlorobium phaeobacteroides (strain BS1).